The primary structure comprises 289 residues: Formamidopyrimidine-DNA glycosylase (289 aa).

P2 (schiff-base intermediate with DNA) is an active-site residue. The active-site Proton donor is the E3. The Proton donor; for beta-elimination activity role is filled by K61. DNA-binding residues include H97, R119, and K168. The FPG-type zinc finger occupies 254-288 (NAYGRAGKPCPRCGEPIVRVQWTNRSSHFCPQCQS). R278 functions as the Proton donor; for delta-elimination activity in the catalytic mechanism.

Belongs to the FPG family. Monomer. Zn(2+) is required as a cofactor.

The catalysed reaction is Hydrolysis of DNA containing ring-opened 7-methylguanine residues, releasing 2,6-diamino-4-hydroxy-5-(N-methyl)formamidopyrimidine.. It carries out the reaction 2'-deoxyribonucleotide-(2'-deoxyribose 5'-phosphate)-2'-deoxyribonucleotide-DNA = a 3'-end 2'-deoxyribonucleotide-(2,3-dehydro-2,3-deoxyribose 5'-phosphate)-DNA + a 5'-end 5'-phospho-2'-deoxyribonucleoside-DNA + H(+). Functionally, involved in base excision repair of DNA damaged by oxidation or by mutagenic agents. Acts as a DNA glycosylase that recognizes and removes damaged bases. Has a preference for oxidized purines, such as 7,8-dihydro-8-oxoguanine (8-oxoG). Has AP (apurinic/apyrimidinic) lyase activity and introduces nicks in the DNA strand. Cleaves the DNA backbone by beta-delta elimination to generate a single-strand break at the site of the removed base with both 3'- and 5'-phosphates. The polypeptide is Formamidopyrimidine-DNA glycosylase (Corynebacterium urealyticum (strain ATCC 43042 / DSM 7109)).